A 954-amino-acid polypeptide reads, in one-letter code: Leucine--tRNA ligase (954 aa).

The short motif at 40 to 51 (PYPSGAGLHVGH) is the 'HIGH' region element. The short motif at 729 to 733 (KMSKS) is the 'KMSKS' region element. Lys-732 is an ATP binding site.

It belongs to the class-I aminoacyl-tRNA synthetase family.

It localises to the cytoplasm. It catalyses the reaction tRNA(Leu) + L-leucine + ATP = L-leucyl-tRNA(Leu) + AMP + diphosphate. This is Leucine--tRNA ligase from Flavobacterium johnsoniae (strain ATCC 17061 / DSM 2064 / JCM 8514 / BCRC 14874 / CCUG 350202 / NBRC 14942 / NCIMB 11054 / UW101) (Cytophaga johnsonae).